Reading from the N-terminus, the 1124-residue chain is Phytochrome type A (1124 aa).

A compositionally biased stretch (low complexity) spans 1-19 (MSTTRPSQSSNNSGRSRNS). The segment at 1–21 (MSTTRPSQSSNNSGRSRNSAR) is disordered. Residues 218–401 (SMERLCDTMV…VFAIHVNKEI (184 aa)) enclose the GAF domain. Cys323 contributes to the phytochromobilin binding site. 2 consecutive PAS domains span residues 617 to 687 (VTSE…LQGE) and 750 to 821 (DYKA…VNFG). In terms of domain architecture, Histidine kinase spans 901–1120 (YMKRQIRNPL…ILSVELAAAH (220 aa)).

The protein belongs to the phytochrome family. In terms of assembly, homodimer. Post-translationally, contains one covalently linked phytochromobilin chromophore.

Regulatory photoreceptor which exists in two forms that are reversibly interconvertible by light: the Pr form that absorbs maximally in the red region of the spectrum and the Pfr form that absorbs maximally in the far-red region. Photoconversion of Pr to Pfr induces an array of morphogenic responses, whereas reconversion of Pfr to Pr cancels the induction of those responses. Pfr controls the expression of a number of nuclear genes including those encoding the small subunit of ribulose-bisphosphate carboxylase, chlorophyll A/B binding protein, protochlorophyllide reductase, rRNA, etc. It also controls the expression of its own gene(s) in a negative feedback fashion. This is Phytochrome type A (PHYA) from Lathyrus sativus (White vetchling).